The sequence spans 82 residues: RNA-binding protein BH0128 (82 aa).

This sequence belongs to the eukaryotic ribosomal protein eL8 family.

The sequence is that of RNA-binding protein BH0128 from Halalkalibacterium halodurans (strain ATCC BAA-125 / DSM 18197 / FERM 7344 / JCM 9153 / C-125) (Bacillus halodurans).